We begin with the raw amino-acid sequence, 104 residues long: Glutaredoxin 1 (104 aa).

The Glutaredoxin domain occupies 1 to 96 (MNKSILHTII…KLLETQPKNK (96 aa)). Cys-17 and Cys-20 are oxidised to a cystine.

The protein belongs to the glutaredoxin family. As to quaternary structure, monomer.

The protein localises to the cytoplasm. In terms of biological role, has a glutathione-disulfide oxidoreductase activity in the presence of NADPH and glutathione reductase. Reduces low molecular weight disulfides and proteins. The protein is Glutaredoxin 1 (grxC1) of Rickettsia typhi (strain ATCC VR-144 / Wilmington).